The sequence spans 20 residues: Neurotoxin BmK 18(2) (20 aa).

The 19-residue stretch at 2-20 folds into the LCN-type CS-alpha/beta domain; that stretch reads RDAYIAEDYDCVYHCARDA.

This sequence belongs to the long (4 C-C) scorpion toxin superfamily. Sodium channel inhibitor family. Alpha subfamily. Expressed by the venom gland.

Its subcellular location is the secreted. Binds to sodium channels (Nav) and inhibits the inactivation of the activated channels, thereby blocking neuronal transmission. This chain is Neurotoxin BmK 18(2), found in Olivierus martensii (Manchurian scorpion).